Here is a 330-residue protein sequence, read N- to C-terminus: Cathepsin S (330 aa).

An N-terminal signal peptide occupies residues 1–17; that stretch reads MKQLVCVLFVCSSAVTQ. A propeptide spans 18–114 (activation peptide); it reads LHKDPTLDHH…ITYKSNPNQM (97 aa). N-linked (GlcNAc...) asparagine glycosylation occurs at N104. 4 disulfides stabilise this stretch: C126–C223, C136–C179, C170–C212, and C271–C319. C139 is a catalytic residue. Active-site residues include H277 and N297.

Belongs to the peptidase C1 family.

The protein localises to the lysosome. It is found in the secreted. The protein resides in the cytoplasmic vesicle. It localises to the phagosome. It carries out the reaction Similar to cathepsin L, but with much less activity on Z-Phe-Arg-|-NHMec, and more activity on the Z-Val-Val-Arg-|-Xaa compound.. Functionally, thiol protease. Key protease responsible for the removal of the invariant chain from MHC class II molecules and MHC class II antigen presentation. The bond-specificity of this proteinase is in part similar to the specificities of cathepsin L. This chain is Cathepsin S (CTSS), found in Saimiri boliviensis boliviensis (Bolivian squirrel monkey).